The sequence spans 270 residues: Tetraspanin-18 (270 aa).

Topologically, residues 1–15 (MRRNCCHVSFASTLK) are cytoplasmic. A helical transmembrane segment spans residues 16-36 (ILNFVQAFIGVSIIIYSIWML). Residues 37 to 99 (HEYSRHLPVD…LRSLDLPAPW (63 aa)) are Extracellular-facing. Residues 100–120 (FIYSFMAVGILVCIVTFIGFI) form a helical membrane-spanning segment. The Cytoplasmic portion of the chain corresponds to 121 to 132 (AAEAINGCCLCF). The chain crosses the membrane as a helical span at residues 133–153 (YSILKTLLILLEAALVAYIAI). The Extracellular portion of the chain corresponds to 154–183 (DRHWEKDLPYDPTGELSSLRAFIEENIDIC). The chain crosses the membrane as a helical span at residues 184–204 (KWVGIAVVAVQLLSLLLAMVL). The Cytoplasmic segment spans residues 205–270 (RAMVSTPKPE…NQSPPVNPKG (66 aa)). The interval 212–249 (KPELDEEEDDENPRSRTWDPLLGPQGNQAPAGSSKIEN) is disordered. Residues 236–249 (QGNQAPAGSSKIEN) are compositionally biased toward polar residues. S245 is subject to Phosphoserine.

Belongs to the tetraspanin (TM4SF) family. Homodimer. Constituent of tobamovirus replication complex. As to expression, expressed in rosette leaves.

The protein resides in the membrane. It is found in the vacuole membrane. Functionally, may be involved in the regulation of cell differentiation. In terms of biological role, promotes intracellular multiplication of tobamoviruses, probably being a component of the replication complex. This Arabidopsis thaliana (Mouse-ear cress) protein is Tetraspanin-18 (TOM2AH2).